We begin with the raw amino-acid sequence, 596 residues long: F-box/WD repeat-containing protein 8 (596 aa).

M1 carries the post-translational modification N-acetylmethionine. A disordered region spans residues 21–95 (QVLRRRRRLE…PDRDAAEPEP (75 aa)). Basic and acidic residues predominate over residues 29–43 (LEAGERRPRRPEAGA). The segment covering 44-64 (RGEPASGYLGLAQGLLEGAGR) has biased composition (low complexity). Residues 71-91 (GRTDRKDVSSRSRSPPDRDAA) show a composition bias toward basic and acidic residues. Phosphoserine is present on residues S82 and S84. The F-box domain maps to 111–157 (PFFDVHLPYELAINIFQYLNRRELGLCAQVSKTWKVIAEDEVLWYRL). WD repeat units lie at residues 199–248 (AVSE…LESE), 257–297 (QPYV…FEHD), 298–338 (ARIQ…SEFE), 339–381 (VQKL…LHYV), 382–427 (YGQP…SKLG), 428–473 (NALG…SAHQ), 474–511 (LGVSAVQMDDWKIVSGGEEGLVSVWDYRMNQKLWEVHS), and 512–559 (RHPV…AYEF).

Component of the Cul7-RING(FBXW8) complex consisting of CUL7, RBX1, SKP1 and FBXW8; within the complex interacts with CUL7 and SKP1. Interacts with GLMN isoform 1. Interacts with OBSL1, CUL1, CUL2, CCT6B, PFDN5, CCT2, CCT3, CCT6A, CCT7, VBP1, CCDC8, ARF1, TRIP13, PDCD5 and GORASP1. Interacts with MAP4K1/HPK1 (when autophosphorylated). Associated component of the 3M complex. Interacts with POUF51 (when phosphorylated on 'Ser-347'). Post-translationally, phosphorylation at Ser-84 by mTORC2 promotes FBXW8 stabilization, allowing its translocation to the cytosol in response to insulin. As to expression, expressed in placenta and embryonic brain (at protein level).

It is found in the cytoplasm. The protein resides in the perinuclear region. The protein localises to the golgi apparatus. Its subcellular location is the cytosol. It participates in protein modification; protein ubiquitination. Its function is as follows. Substrate-recognition component of the Cul7-RING(FBXW8) ubiquitin ligase complex, which mediates the ubiquitination and subsequent proteasomal degradation of target proteins. The Cul7-RING(FBXW8) complex mediates ubiquitination and consequent degradation of GORASP1, acting as a component of the ubiquitin ligase pathway that regulates Golgi morphogenesis and dendrite patterning in brain. Mediates ubiquitination and degradation of IRS1 in a mTOR-dependent manner: the Cul7-RING(FBXW8) complex recognizes and binds IRS1 previously phosphorylated by S6 kinase (RPS6KB1 or RPS6KB2). The Cul7-RING(FBXW8) complex also mediates ubiquitination of MAP4K1/HPK1: recognizes and binds autophosphorylated MAP4K1/HPK1, leading to its degradation, thereby affecting cell proliferation and differentiation. The Cul7-RING(FBXW8) complex also mediates ubiquitination of phosphorylated cyclin-D1 (CCND1). The Cul7-RING(FBXW8) complex is however not a major regulator of CCND1 stability during the G1/S transition. Associated component of the 3M complex, suggesting that it mediates some of 3M complex functions. In Rattus norvegicus (Rat), this protein is F-box/WD repeat-containing protein 8 (Fbxw8).